Consider the following 140-residue polypeptide: Phosphoribosyl-AMP cyclohydrolase (140 aa).

Residue aspartate 78 coordinates Mg(2+). Residue cysteine 79 participates in Zn(2+) binding. Aspartate 80 and aspartate 82 together coordinate Mg(2+). The Zn(2+) site is built by cysteine 96 and cysteine 103.

This sequence belongs to the PRA-CH family. Homodimer. Mg(2+) serves as cofactor. The cofactor is Zn(2+).

It is found in the cytoplasm. The enzyme catalyses 1-(5-phospho-beta-D-ribosyl)-5'-AMP + H2O = 1-(5-phospho-beta-D-ribosyl)-5-[(5-phospho-beta-D-ribosylamino)methylideneamino]imidazole-4-carboxamide. The protein operates within amino-acid biosynthesis; L-histidine biosynthesis; L-histidine from 5-phospho-alpha-D-ribose 1-diphosphate: step 3/9. Functionally, catalyzes the hydrolysis of the adenine ring of phosphoribosyl-AMP. The protein is Phosphoribosyl-AMP cyclohydrolase of Ralstonia nicotianae (strain ATCC BAA-1114 / GMI1000) (Ralstonia solanacearum).